The sequence spans 466 residues: MWGCWLGLLLLLLAGQAALEARRSRWRRELAPGLHLRGIRDAGGRYCQEQDMCCRGRADECALPYLGATCYCDLFCNRTVSDCCPDFWDFCLGIPPPFPPVQGCMHGGRIYPVFGTYWDNCNRCTCHEGGHWECDQEPCLVDPDMIKAINRGNYGWQAGNHSAFWGMTLDEGIRYRLGTIRPSSTVMNMNEIYTVLGQGEVLPTAFEASEKWPNLIHEPLDQGNCAGSWAFSTAAVASDRVSIHSLGHMTPILSPQNLLSCDTHHQQGCRGGRLDGAWWFLRRRGVVSDNCYPFSGREQNEASPTPRCMMHSRAMGRGKRQATSRCPNGQVDSNDIYQVTPAYRLGSDEKEIMKELMENGPVQALMEVHEDFFLYQRGIYSHTPVSQGRPEQYRRHGTHSVKITGWGEETLPDGRTIKYWTAANSWGPWWGERGHFRIVRGTNECDIETFVLGVWGRVGMEDMGHH.

An N-terminal signal peptide occupies residues 1–21; sequence MWGCWLGLLLLLLAGQAALEA. Residues 49–96 form the SMB domain; that stretch reads EQDMCCRGRADECALPYLGATCYCDLFCNRTVSDCCPDFWDFCLGIPP. 5 disulfides stabilise this stretch: C53–C72, C70–C72, C70–C84, C76–C83, and C84–C91. N-linked (GlcNAc...) asparagine glycosylation occurs at N77. N-linked (GlcNAc...) asparagine glycosylation is present at N160.

Belongs to the peptidase C1 family. Post-translationally, glycosylated. Highly expressed in kidney, heart and adrenocortical cells of adrenal glands. Moderately expressed in spleen and liver. Also found in prostate, seminal vesicle, epididymis and testis in male reproductive organs. In adrenal glands is found in the outer cortical regions corresponding to the zona glomerulosa (zG) and the undifferentiated cell zone (zU) (at protein level).

The protein localises to the secreted. In terms of biological role, may be implicated in the adrenocortical zonation and in mechanisms for repressing the CYP11B1 gene expression in adrenocortical cells. This is a non catalytic peptidase C1 family protein. In Mus musculus (Mouse), this protein is Tubulointerstitial nephritis antigen-like (Tinagl1).